The sequence spans 603 residues: Elongation factor 4 (603 aa).

The tr-type G domain occupies S7–R189. GTP-binding positions include D19–T24 and N136–D139.

Belongs to the TRAFAC class translation factor GTPase superfamily. Classic translation factor GTPase family. LepA subfamily.

It localises to the cell inner membrane. The catalysed reaction is GTP + H2O = GDP + phosphate + H(+). Its function is as follows. Required for accurate and efficient protein synthesis under certain stress conditions. May act as a fidelity factor of the translation reaction, by catalyzing a one-codon backward translocation of tRNAs on improperly translocated ribosomes. Back-translocation proceeds from a post-translocation (POST) complex to a pre-translocation (PRE) complex, thus giving elongation factor G a second chance to translocate the tRNAs correctly. Binds to ribosomes in a GTP-dependent manner. The chain is Elongation factor 4 from Thermosynechococcus vestitus (strain NIES-2133 / IAM M-273 / BP-1).